The sequence spans 394 residues: Carbamoyl phosphate synthase small chain (394 aa).

The interval 1–188 is CPSase; the sequence is MIRKERAILA…ALPYAFPTLR (188 aa). Positions 49, 240, and 242 each coordinate L-glutamine. Residues 192-379 form the Glutamine amidotransferase type-1 domain; sequence RVVLMDFGIK…IEEIDAFDGG (188 aa). Cys267 acts as the Nucleophile in catalysis. L-glutamine contacts are provided by Leu268, Gln271, Asn309, Gly311, and Tyr312. Residues His352 and Glu354 contribute to the active site.

Belongs to the CarA family. In terms of assembly, composed of two chains; the small (or glutamine) chain promotes the hydrolysis of glutamine to ammonia, which is used by the large (or ammonia) chain to synthesize carbamoyl phosphate. Tetramer of heterodimers (alpha,beta)4.

It catalyses the reaction hydrogencarbonate + L-glutamine + 2 ATP + H2O = carbamoyl phosphate + L-glutamate + 2 ADP + phosphate + 2 H(+). It carries out the reaction L-glutamine + H2O = L-glutamate + NH4(+). The protein operates within amino-acid biosynthesis; L-arginine biosynthesis; carbamoyl phosphate from bicarbonate: step 1/1. It participates in pyrimidine metabolism; UMP biosynthesis via de novo pathway; (S)-dihydroorotate from bicarbonate: step 1/3. In terms of biological role, small subunit of the glutamine-dependent carbamoyl phosphate synthetase (CPSase). CPSase catalyzes the formation of carbamoyl phosphate from the ammonia moiety of glutamine, carbonate, and phosphate donated by ATP, constituting the first step of 2 biosynthetic pathways, one leading to arginine and/or urea and the other to pyrimidine nucleotides. The small subunit (glutamine amidotransferase) binds and cleaves glutamine to supply the large subunit with the substrate ammonia. This chain is Carbamoyl phosphate synthase small chain, found in Deinococcus radiodurans (strain ATCC 13939 / DSM 20539 / JCM 16871 / CCUG 27074 / LMG 4051 / NBRC 15346 / NCIMB 9279 / VKM B-1422 / R1).